Reading from the N-terminus, the 526-residue chain is Probable fucosyltransferase 7 (526 aa).

Over 1–4 (MKTK) the chain is Cytoplasmic. Residues 5–25 (LMITIFSCLLLWSMLLLLSFS) traverse the membrane as a helical; Signal-anchor for type II membrane protein segment. The Lumenal portion of the chain corresponds to 26-526 (NIFKHQLLGA…KLVDDTKNEL (501 aa)). 3 N-linked (GlcNAc...) asparagine glycosylation sites follow: Asn-211, Asn-215, and Asn-363.

It belongs to the glycosyltransferase 37 family. In terms of tissue distribution, expressed in roots, leaves, stems and seedlings.

Its subcellular location is the golgi apparatus. The protein resides in the golgi stack membrane. It participates in protein modification; protein glycosylation. In terms of biological role, may be involved in cell wall biosynthesis. May act as a fucosyltransferase. The chain is Probable fucosyltransferase 7 (FUT7) from Arabidopsis thaliana (Mouse-ear cress).